Reading from the N-terminus, the 202-residue chain is Sterile alpha motif domain-containing protein 10 (202 aa).

The 67-residue stretch at 118–184 (WSQQDVCKWL…LQQVLRLQVR (67 aa)) folds into the SAM domain.

This chain is Sterile alpha motif domain-containing protein 10 (SAMD10), found in Homo sapiens (Human).